The primary structure comprises 218 residues: MTVLNARERKDQKAHQTKELRNQGHVPGVLYGKKVKSTPVSVEAVAFLKTFRDVGQNGLFDLQLENGGKHHVMVQEVQIDPLNNQYMHVDFFEVDMNEERDVNVPVHLEGDAPGAKEGGIVNHLLYEITVHCLPADIPESITVDISNLNIGDSLSVSDIRANVPVTIVNEDDETVVTVTPPTVTEDPDATEEDNTTAESVEATGERNDDNLDRPGRVE.

Residues 178–218 (VTPPTVTEDPDATEEDNTTAESVEATGERNDDNLDRPGRVE) are disordered. Over residues 185-195 (EDPDATEEDNT) the composition is skewed to acidic residues. Residues 203 to 218 (TGERNDDNLDRPGRVE) show a composition bias toward basic and acidic residues.

This sequence belongs to the bacterial ribosomal protein bL25 family. CTC subfamily. In terms of assembly, part of the 50S ribosomal subunit; part of the 5S rRNA/L5/L18/L25 subcomplex. Contacts the 5S rRNA. Binds to the 5S rRNA independently of L5 and L18.

This is one of the proteins that binds to the 5S RNA in the ribosome where it forms part of the central protuberance. The polypeptide is Large ribosomal subunit protein bL25 (Shouchella clausii (strain KSM-K16) (Alkalihalobacillus clausii)).